Reading from the N-terminus, the 388-residue chain is uncharacterized protein (388 aa).

Helical transmembrane passes span 18–38 (AAMFLNYLTIGIPLVMLPLYV), 42–62 (LHLSDLLIGIAVGSQFIATLL), 89–111 (ASGLLMLVSLIAHPVPLLAWAIL), 116–136 (VLLGIGESFILTGNLTWGMWL), 145–165 (VISWNGMATYGALAIGAPLGL), 171–191 (AGLALPALLVVLLPIIASGVI), 219–239 (TGLVLQGIGFATLSAFTALWF), 248–268 (GFAMTLFGIAFIAVRFFCAKF), 287–307 (TGLAVMWAAPSAGAALIGAAI), 341–361 (AFQDLAYGFTGPIAGLLTPFI), and 365–385 (QVFLLAAACALLGAAVVHLLL).

It belongs to the major facilitator superfamily. YfcJ family.

The protein resides in the cell inner membrane. This is an uncharacterized protein from Salmonella typhimurium (strain LT2 / SGSC1412 / ATCC 700720).